The sequence spans 120 residues: Large ribosomal subunit protein uL18 (120 aa).

The protein belongs to the universal ribosomal protein uL18 family. In terms of assembly, part of the 50S ribosomal subunit; part of the 5S rRNA/L5/L18/L25 subcomplex. Contacts the 5S and 23S rRNAs.

This is one of the proteins that bind and probably mediate the attachment of the 5S RNA into the large ribosomal subunit, where it forms part of the central protuberance. The polypeptide is Large ribosomal subunit protein uL18 (Exiguobacterium sp. (strain ATCC BAA-1283 / AT1b)).